The chain runs to 552 residues: Glutamyl-tRNA reductase 1, chloroplastic (552 aa).

Residues 150-153 (TCNR), serine 210, 215-217 (EGQ), and glutamine 221 each bind substrate. Residue cysteine 151 is the Nucleophile of the active site. 292-297 (GAGKMG) contacts NADP(+).

Belongs to the glutamyl-tRNA reductase family. As to expression, primarily in cotyledons and hypocotyls of greening cucumber seedlings.

It localises to the plastid. The protein localises to the chloroplast. It carries out the reaction (S)-4-amino-5-oxopentanoate + tRNA(Glu) + NADP(+) = L-glutamyl-tRNA(Glu) + NADPH + H(+). Its pathway is porphyrin-containing compound metabolism; protoporphyrin-IX biosynthesis; 5-aminolevulinate from L-glutamyl-tRNA(Glu): step 1/2. In terms of biological role, catalyzes the NADPH-dependent reduction of glutamyl-tRNA(Glu) to glutamate 1-semialdehyde (GSA). This Cucumis sativus (Cucumber) protein is Glutamyl-tRNA reductase 1, chloroplastic (HEMA1).